We begin with the raw amino-acid sequence, 425 residues long: Divalent metal cation transporter MntH (425 aa).

11 helical membrane passes run 30 to 50 (LLPF…PGNF), 61 to 81 (GYML…IQSL), 107 to 127 (IGLW…EFIG), 134 to 154 (LLFG…SFAI), 167 to 187 (AGIA…TFFA), 209 to 231 (VLLA…HSAL), 255 to 275 (ILIA…VAAA), 294 to 314 (FGHL…LVAG), 344 to 364 (FITI…TTAL), 365 to 385 (VLSQ…LIMF), and 401 to 421 (ITVV…FLIV).

It belongs to the NRAMP family.

The protein localises to the cell membrane. Its function is as follows. H(+)-stimulated, divalent metal cation uptake system. Involved in manganese uptake. Can probably also transport cadmium, cobalt, copper and zinc, but not iron. May be the predominant transporter of manganese during logarithmic phase growth. The sequence is that of Divalent metal cation transporter MntH from Bacillus subtilis (strain 168).